We begin with the raw amino-acid sequence, 265 residues long: 3-methyl-2-oxobutanoate hydroxymethyltransferase (265 aa).

Residues Asp-45 and Asp-84 each coordinate Mg(2+). Residues 45–46 (DS), Asp-84, and Lys-114 contribute to the 3-methyl-2-oxobutanoate site. A Mg(2+)-binding site is contributed by Glu-116. Glu-183 (proton acceptor) is an active-site residue.

It belongs to the PanB family. Homodecamer; pentamer of dimers. Mg(2+) is required as a cofactor.

It is found in the cytoplasm. The catalysed reaction is 3-methyl-2-oxobutanoate + (6R)-5,10-methylene-5,6,7,8-tetrahydrofolate + H2O = 2-dehydropantoate + (6S)-5,6,7,8-tetrahydrofolate. It functions in the pathway cofactor biosynthesis; (R)-pantothenate biosynthesis; (R)-pantoate from 3-methyl-2-oxobutanoate: step 1/2. Its function is as follows. Catalyzes the reversible reaction in which hydroxymethyl group from 5,10-methylenetetrahydrofolate is transferred onto alpha-ketoisovalerate to form ketopantoate. In Salinibacter ruber (strain DSM 13855 / M31), this protein is 3-methyl-2-oxobutanoate hydroxymethyltransferase.